Here is a 640-residue protein sequence, read N- to C-terminus: Endoglucanase 1 (640 aa).

The first 24 residues, methionine 1–alanine 24, serve as a signal peptide directing secretion. The active-site Nucleophile is aspartate 94. Catalysis depends on residues histidine 433, aspartate 485, and glutamate 494. N-linked (GlcNAc...) asparagine glycans are attached at residues asparagine 528 and asparagine 548.

Belongs to the glycosyl hydrolase 9 (cellulase E) family. As to expression, expressed in roots, leaf sheaths and flowers.

Its subcellular location is the secreted. The catalysed reaction is Endohydrolysis of (1-&gt;4)-beta-D-glucosidic linkages in cellulose, lichenin and cereal beta-D-glucans.. The protein is Endoglucanase 1 (GLU7) of Oryza sativa subsp. japonica (Rice).